The sequence spans 304 residues: Phosphoribosylaminoimidazole-succinocarboxamide synthase (304 aa).

Belongs to the SAICAR synthetase family.

The catalysed reaction is 5-amino-1-(5-phospho-D-ribosyl)imidazole-4-carboxylate + L-aspartate + ATP = (2S)-2-[5-amino-1-(5-phospho-beta-D-ribosyl)imidazole-4-carboxamido]succinate + ADP + phosphate + 2 H(+). It participates in purine metabolism; IMP biosynthesis via de novo pathway; 5-amino-1-(5-phospho-D-ribosyl)imidazole-4-carboxamide from 5-amino-1-(5-phospho-D-ribosyl)imidazole-4-carboxylate: step 1/2. This is Phosphoribosylaminoimidazole-succinocarboxamide synthase from Corynebacterium efficiens (strain DSM 44549 / YS-314 / AJ 12310 / JCM 11189 / NBRC 100395).